We begin with the raw amino-acid sequence, 921 residues long: TRPM8 channel-associated factor 1 (921 aa).

A Peptidase M60 domain is found at 542 to 841; sequence YCWMSTGLYI…TYLQLQEAFG (300 aa).

It belongs to the TCAF family. Interacts with TRPM8 (via N-terminus and C-terminus domains); the interaction inhibits TRPM8 channel activity. Interacts with TRPV6.

It localises to the cell membrane. Its function is as follows. Positively regulates the plasma membrane cation channel TRPM8 activity. Involved in the recruitment of TRPM8 to the cell surface. Promotes prostate cancer cell migration inhibition in a TRPM8-dependent manner. The polypeptide is TRPM8 channel-associated factor 1 (Bos taurus (Bovine)).